A 230-amino-acid chain; its full sequence is MKKKGLNFLMQVAIDGPASAGKSTVAKIIAHNLGYIYIDTGAMYRACTLIAHDNHVDYGDEKAILDLVDKSTIEFKQEDGEQKVYVNGKDVSIAIRTPEITENVSQVSALKSIREKMVELQREMAGKHDVIMDGRDIGTTVLPDAEVKIFLIASVASRAKRRFLDFQEKGIHQDLKDIEHDIEVRDYKDSHREISPLKKAADAIELDTTNLTIDEVVAKISEIIQKKQKN.

16-24 serves as a coordination point for ATP; the sequence is GPASAGKST.

The protein belongs to the cytidylate kinase family. Type 1 subfamily.

Its subcellular location is the cytoplasm. The catalysed reaction is CMP + ATP = CDP + ADP. The enzyme catalyses dCMP + ATP = dCDP + ADP. The polypeptide is Cytidylate kinase (Lactobacillus gasseri (strain ATCC 33323 / DSM 20243 / BCRC 14619 / CIP 102991 / JCM 1131 / KCTC 3163 / NCIMB 11718 / NCTC 13722 / AM63)).